The chain runs to 234 residues: Geranylgeranylglyceryl phosphate synthase (234 aa).

Residues aspartate 24 and serine 52 each contribute to the Mg(2+) site. Sn-glycerol 1-phosphate is bound by residues 172-178 (YLEAGSG), 203-204 (GG), and 225-226 (GT).

It belongs to the GGGP/HepGP synthase family. Group II subfamily. In terms of assembly, homodimer. Requires Mg(2+) as cofactor.

The enzyme catalyses sn-glycerol 1-phosphate + (2E,6E,10E)-geranylgeranyl diphosphate = sn-3-O-(geranylgeranyl)glycerol 1-phosphate + diphosphate. Its function is as follows. Prenyltransferase that catalyzes the transfer of the geranylgeranyl moiety of geranylgeranyl diphosphate (GGPP) to the C3 hydroxyl of sn-glycerol-1-phosphate (G1P). This Zunongwangia profunda (strain DSM 18752 / CCTCC AB 206139 / SM-A87) (Wangia profunda) protein is Geranylgeranylglyceryl phosphate synthase.